Reading from the N-terminus, the 381-residue chain is Probable tRNA sulfurtransferase (381 aa).

The THUMP domain maps to 52-155 (LTNLDALKYV…DASTYIFIDY (104 aa)). Residues 173–174 (LM), 198–199 (NF), Arg-255, Gly-277, and Gln-286 each bind ATP.

It belongs to the ThiI family.

It localises to the cytoplasm. It catalyses the reaction [ThiI sulfur-carrier protein]-S-sulfanyl-L-cysteine + a uridine in tRNA + 2 reduced [2Fe-2S]-[ferredoxin] + ATP + H(+) = [ThiI sulfur-carrier protein]-L-cysteine + a 4-thiouridine in tRNA + 2 oxidized [2Fe-2S]-[ferredoxin] + AMP + diphosphate. The catalysed reaction is [ThiS sulfur-carrier protein]-C-terminal Gly-Gly-AMP + S-sulfanyl-L-cysteinyl-[cysteine desulfurase] + AH2 = [ThiS sulfur-carrier protein]-C-terminal-Gly-aminoethanethioate + L-cysteinyl-[cysteine desulfurase] + A + AMP + 2 H(+). It functions in the pathway cofactor biosynthesis; thiamine diphosphate biosynthesis. Its function is as follows. Catalyzes the ATP-dependent transfer of a sulfur to tRNA to produce 4-thiouridine in position 8 of tRNAs, which functions as a near-UV photosensor. Also catalyzes the transfer of sulfur to the sulfur carrier protein ThiS, forming ThiS-thiocarboxylate. This is a step in the synthesis of thiazole, in the thiamine biosynthesis pathway. The sulfur is donated as persulfide by IscS. The polypeptide is Probable tRNA sulfurtransferase (Metamycoplasma arthritidis (strain 158L3-1) (Mycoplasma arthritidis)).